We begin with the raw amino-acid sequence, 474 residues long: Mitogen-activated protein kinase pmk-3 (474 aa).

Positions 1-13 are enriched in low complexity; the sequence is MASVPSSSSLPVS. Residues 1 to 90 form a disordered region; sequence MASVPSSSSL…EEEEDILSKP (90 aa). Residues 30-48 show a composition bias toward polar residues; that stretch reads KRSNNQSQPPESYEPNTWL. Positions 52–69 are enriched in basic and acidic residues; that stretch reads REQEQQKKLAAENIKKQS. The Protein kinase domain occupies 114-419; it reads YDVEPNSIEY…VEEAIQHPYL (306 aa). ATP-binding positions include 124 to 132 and Lys-150; that span reads LGGGSFGNV. Asp-252 functions as the Proton acceptor in the catalytic mechanism. Residue Thr-285 is modified to Phosphothreonine. The TXY signature appears at 285–287; it reads TQY. Residue Tyr-287 is modified to Phosphotyrosine.

This sequence belongs to the protein kinase superfamily. CMGC Ser/Thr protein kinase family. MAP kinase subfamily. Interacts with mak-2. May interact with vhp-1. May interact with uev-3. Requires Mg(2+) as cofactor. Post-translationally, dually phosphorylated on Thr-285 and Tyr-287, which activates the enzyme. Expressed throughout the intestine.

It is found in the nucleus. It localises to the cytoplasm. The protein resides in the cell projection. Its subcellular location is the axon. The protein localises to the dendrite. It is found in the cilium. The enzyme catalyses L-seryl-[protein] + ATP = O-phospho-L-seryl-[protein] + ADP + H(+). The catalysed reaction is L-threonyl-[protein] + ATP = O-phospho-L-threonyl-[protein] + ADP + H(+). With respect to regulation, activated by phosphorylation on threonine and tyrosine. Responds to activation by environmental stress and pro-inflammatory cytokines by phosphorylating downstream targets. Involved in axon regeneration after injury, probably downstream of dlk-1 and mkk-4 and upstream of mak-2. May phosphorylate mak-2. Plays a role in cilium length regulation, possibly by reducing rab-5 mediated endocytosis. Plays a role in the formation of muscle connections, also called muscle arm extensions, between the body wall and the motor axons in the dorsal and ventral cord. This Caenorhabditis elegans protein is Mitogen-activated protein kinase pmk-3 (pmk-3).